The following is a 103-amino-acid chain: Cell division suppressor protein YneA (103 aa).

Residues 36–87 (VKIKVQDGDTLWSLADHVAEKKHINKEDFIEWVTENNHLQTADIKPGDELIL) form the LysM domain.

This sequence belongs to the YneA family.

The protein localises to the cytoplasm. Functionally, inhibits cell division during the SOS response. Affects a later stage of the cell division protein assembly, after the assembly of the Z ring, by probably suppressing recruitment of FtsL and/or DivIC to the division machinery. This chain is Cell division suppressor protein YneA, found in Bacillus velezensis (strain DSM 23117 / BGSC 10A6 / LMG 26770 / FZB42) (Bacillus amyloliquefaciens subsp. plantarum).